A 352-amino-acid chain; its full sequence is UPF0324 membrane protein RA0957 (352 aa).

10 helical membrane passes run 24–43 (VVSY…SAQF), 48–67 (YGAP…NFLS), 104–126 (LGVS…AIIV), 136–158 (LSLL…LNAV), 169–191 (LALT…PVLA), 201–223 (SGVF…FAMS), 235–257 (IVRV…VLGA), 272–294 (GFVL…AAAG), 301–318 (SRWL…KTSV), and 328–350 (HVTL…LLWY).

The protein belongs to the UPF0324 family.

The protein localises to the cell membrane. The chain is UPF0324 membrane protein RA0957 from Rhizobium meliloti (strain 1021) (Ensifer meliloti).